A 263-amino-acid polypeptide reads, in one-letter code: Hydroxyethylthiazole kinase 1 (263 aa).

Substrate is bound at residue Met-42. 2 residues coordinate ATP: Lys-118 and Thr-164. Gly-191 contributes to the substrate binding site.

This sequence belongs to the Thz kinase family. Mg(2+) is required as a cofactor.

The catalysed reaction is 5-(2-hydroxyethyl)-4-methylthiazole + ATP = 4-methyl-5-(2-phosphooxyethyl)-thiazole + ADP + H(+). The protein operates within cofactor biosynthesis; thiamine diphosphate biosynthesis; 4-methyl-5-(2-phosphoethyl)-thiazole from 5-(2-hydroxyethyl)-4-methylthiazole: step 1/1. Its function is as follows. Catalyzes the phosphorylation of the hydroxyl group of 4-methyl-5-beta-hydroxyethylthiazole (THZ). In Clostridium botulinum (strain 657 / Type Ba4), this protein is Hydroxyethylthiazole kinase 1.